Here is a 183-residue protein sequence, read N- to C-terminus: MPNFWILENRRSYTSDTCMSRIVKEYKVILKTLASDDPIANPYRGIIESLNPIDETDLSKWEAIISGPSDTPYENHQFRILIEVPSSYPMNPPKISFMQNNILHCNVKSATGEICLNILKPEEWTPVWDLLHCVHAVWRLLREPVCDSPLDVDIGNIIRCGDMSAYQGIVKYFLAERERINNH.

In terms of domain architecture, UBC core spans 17–179 (TCMSRIVKEY…VKYFLAERER (163 aa)). Cysteine 115 acts as the Glycyl thioester intermediate in catalysis.

It belongs to the ubiquitin-conjugating enzyme family.

The protein localises to the peroxisome. It carries out the reaction S-ubiquitinyl-[E1 ubiquitin-activating enzyme]-L-cysteine + [E2 ubiquitin-conjugating enzyme]-L-cysteine = [E1 ubiquitin-activating enzyme]-L-cysteine + S-ubiquitinyl-[E2 ubiquitin-conjugating enzyme]-L-cysteine.. It participates in protein modification; protein ubiquitination. Functionally, catalyzes the covalent attachment of ubiquitin to other proteins. Essential for peroxisome biogenesis. Required for UBC4-independent ubiquitination of PEX5. This is Ubiquitin-conjugating enzyme E2-21 kDa (PEX4) from Saccharomyces cerevisiae (strain ATCC 204508 / S288c) (Baker's yeast).